The following is a 296-amino-acid chain: Tyrosine recombinase XerC (296 aa).

One can recognise a Core-binding (CB) domain in the interval 1 to 84 (MDKIQETFLY…TLRTFYEFWM (84 aa)). A Tyr recombinase domain is found at 105-286 (YLPQFFYEEE…SNQQLRKVYL (182 aa)). Active-site residues include arginine 145, lysine 169, histidine 238, arginine 241, and histidine 264. Tyrosine 273 serves as the catalytic O-(3'-phospho-DNA)-tyrosine intermediate.

This sequence belongs to the 'phage' integrase family. XerC subfamily. In terms of assembly, forms a cyclic heterotetrameric complex composed of two molecules of XerC and two molecules of XerD.

Its subcellular location is the cytoplasm. Functionally, site-specific tyrosine recombinase, which acts by catalyzing the cutting and rejoining of the recombining DNA molecules. The XerC-XerD complex is essential to convert dimers of the bacterial chromosome into monomers to permit their segregation at cell division. It also contributes to the segregational stability of plasmids. In Staphylococcus epidermidis (strain ATCC 35984 / DSM 28319 / BCRC 17069 / CCUG 31568 / BM 3577 / RP62A), this protein is Tyrosine recombinase XerC.